The sequence spans 142 residues: MKDINEIKELIPHRYPILMVDRLEELEPGHRAKGVKNVSANEPFLQGHFPDRPLMPGVLQIEAMAQVGACALMSLPENEGKLAVFGGVDKVKFKRQVQPGDVLSIEVELTRVKGSIGKGEGKVYVGDELAAQGQLTFALVEK.

Residue His48 is part of the active site.

It belongs to the thioester dehydratase family. FabZ subfamily.

The protein localises to the cytoplasm. The catalysed reaction is a (3R)-hydroxyacyl-[ACP] = a (2E)-enoyl-[ACP] + H2O. Its function is as follows. Involved in unsaturated fatty acids biosynthesis. Catalyzes the dehydration of short chain beta-hydroxyacyl-ACPs and long chain saturated and unsaturated beta-hydroxyacyl-ACPs. The chain is 3-hydroxyacyl-[acyl-carrier-protein] dehydratase FabZ from Natranaerobius thermophilus (strain ATCC BAA-1301 / DSM 18059 / JW/NM-WN-LF).